The following is a 158-amino-acid chain: S-ribosylhomocysteine lyase (158 aa).

3 residues coordinate Fe cation: H54, H58, and C124.

This sequence belongs to the LuxS family. As to quaternary structure, homodimer. The cofactor is Fe cation.

It catalyses the reaction S-(5-deoxy-D-ribos-5-yl)-L-homocysteine = (S)-4,5-dihydroxypentane-2,3-dione + L-homocysteine. Its function is as follows. Involved in the synthesis of autoinducer 2 (AI-2) which is secreted by bacteria and is used to communicate both the cell density and the metabolic potential of the environment. The regulation of gene expression in response to changes in cell density is called quorum sensing. Catalyzes the transformation of S-ribosylhomocysteine (RHC) to homocysteine (HC) and 4,5-dihydroxy-2,3-pentadione (DPD). This chain is S-ribosylhomocysteine lyase, found in Limosilactobacillus reuteri (strain DSM 20016) (Lactobacillus reuteri).